We begin with the raw amino-acid sequence, 335 residues long: Phosphatidylcholine-sterol acyltransferase (335 aa).

The signal sequence occupies residues 1–18 (MKKWFVCLLGLVALTVQA). Ser34 serves as the catalytic Nucleophile. Active-site residues include Asp306 and His309.

This sequence belongs to the 'GDSL' lipolytic enzyme family.

It carries out the reaction a sterol + a 1,2-diacyl-sn-glycero-3-phosphocholine = a sterol ester + a 1-acyl-sn-glycero-3-phosphocholine. Functionally, fatty acid transfer between phosphatidylcholine and cholesterol. The sequence is that of Phosphatidylcholine-sterol acyltransferase from Aeromonas hydrophila.